Here is a 342-residue protein sequence, read N- to C-terminus: Biotin synthase (342 aa).

The Radical SAM core domain occupies 55 to 274 (NAVQCNQLLN…IALARIMMPK (220 aa)). Residues cysteine 70, cysteine 74, and cysteine 77 each coordinate [4Fe-4S] cluster. Cysteine 114, cysteine 145, cysteine 205, and arginine 278 together coordinate [2Fe-2S] cluster.

This sequence belongs to the radical SAM superfamily. Biotin synthase family. As to quaternary structure, homodimer. [4Fe-4S] cluster is required as a cofactor. [2Fe-2S] cluster serves as cofactor.

It carries out the reaction (4R,5S)-dethiobiotin + (sulfur carrier)-SH + 2 reduced [2Fe-2S]-[ferredoxin] + 2 S-adenosyl-L-methionine = (sulfur carrier)-H + biotin + 2 5'-deoxyadenosine + 2 L-methionine + 2 oxidized [2Fe-2S]-[ferredoxin]. It functions in the pathway cofactor biosynthesis; biotin biosynthesis; biotin from 7,8-diaminononanoate: step 2/2. Catalyzes the conversion of dethiobiotin (DTB) to biotin by the insertion of a sulfur atom into dethiobiotin via a radical-based mechanism. The sequence is that of Biotin synthase from Rhodopseudomonas palustris (strain BisB5).